The sequence spans 232 residues: Small ribosomal subunit protein uS2 (232 aa).

It belongs to the universal ribosomal protein uS2 family.

The protein is Small ribosomal subunit protein uS2 of Carboxydothermus hydrogenoformans (strain ATCC BAA-161 / DSM 6008 / Z-2901).